The following is a 58-amino-acid chain: Large ribosomal subunit protein eL37 (58 aa).

Residues Cys-20, Cys-23, Cys-35, and Cys-38 each contribute to the Zn(2+) site. The C4-type zinc-finger motif lies at 20 to 38 (CRRCGEKSYHTKKKVCSSC).

The protein belongs to the eukaryotic ribosomal protein eL37 family. Zn(2+) is required as a cofactor.

Its function is as follows. Binds to the 23S rRNA. This chain is Large ribosomal subunit protein eL37, found in Haloquadratum walsbyi (strain DSM 16790 / HBSQ001).